We begin with the raw amino-acid sequence, 162 residues long: Ubiquitin-fold modifier-conjugating enzyme 1 (162 aa).

Residue Cys115 is the Glycyl thioester intermediate of the active site.

It belongs to the ubiquitin-conjugating enzyme family. UFC1 subfamily. As to quaternary structure, interacts with uba-5. As to expression, expressed in the intestine.

E2-like enzyme which forms an intermediate with ufm-1. The intermediate is formed via a thioester linkage. The chain is Ubiquitin-fold modifier-conjugating enzyme 1 from Caenorhabditis elegans.